We begin with the raw amino-acid sequence, 230 residues long: Cytidylate kinase (230 aa).

12–20 (GPSGAGKGT) provides a ligand contact to ATP.

It belongs to the cytidylate kinase family. Type 1 subfamily.

It is found in the cytoplasm. The catalysed reaction is CMP + ATP = CDP + ADP. The enzyme catalyses dCMP + ATP = dCDP + ADP. The sequence is that of Cytidylate kinase from Shewanella sp. (strain W3-18-1).